A 158-amino-acid polypeptide reads, in one-letter code: Lysozyme C (158 aa).

Residues 1-18 form the signal peptide; that stretch reads MRVLPLALLVGLLAVSDA. One can recognise a C-type lysozyme domain in the interval 19–150; that stretch reads KVLGKCEFAR…DQYMAECWSR (132 aa). Cystine bridges form between cysteine 24-cysteine 147, cysteine 46-cysteine 135, cysteine 80-cysteine 93, and cysteine 89-cysteine 107. Residues glutamate 51 and aspartate 68 contribute to the active site.

It belongs to the glycosyl hydrolase 22 family. In terms of assembly, monomer. Strongly expressed in gill and gonad, and marginally detectable in hemolymph and lymphoid organ. Not expressed in kidney, hepatopancreas or tail muscle.

The protein localises to the secreted. The enzyme catalyses Hydrolysis of (1-&gt;4)-beta-linkages between N-acetylmuramic acid and N-acetyl-D-glucosamine residues in a peptidoglycan and between N-acetyl-D-glucosamine residues in chitodextrins.. In terms of biological role, lysozymes have primarily a bacteriolytic function; those in tissues and body fluids are associated with the monocyte-macrophage system and enhance the activity of immunoagents. Has bacteriolytic activity against Gram-positive bacterium M.luteus, and Gram-negative shrimp pathogenic bacteria V.alginolyticus, V.parahaemolyticus and V.vulnificus. May play a role in host defense. The protein is Lysozyme C of Penaeus merguiensis (Banana prawn).